Consider the following 187-residue polypeptide: Shikimate kinase (187 aa).

14–19 (GSGKST) serves as a coordination point for ATP. Serine 18 contacts Mg(2+). Positions 36, 60, and 82 each coordinate substrate. Arginine 120 contributes to the ATP binding site. Arginine 147 is a substrate binding site.

Belongs to the shikimate kinase family. As to quaternary structure, monomer. Mg(2+) is required as a cofactor.

It is found in the cytoplasm. The catalysed reaction is shikimate + ATP = 3-phosphoshikimate + ADP + H(+). It participates in metabolic intermediate biosynthesis; chorismate biosynthesis; chorismate from D-erythrose 4-phosphate and phosphoenolpyruvate: step 5/7. In terms of biological role, catalyzes the specific phosphorylation of the 3-hydroxyl group of shikimic acid using ATP as a cosubstrate. In Chlorobaculum parvum (strain DSM 263 / NCIMB 8327) (Chlorobium vibrioforme subsp. thiosulfatophilum), this protein is Shikimate kinase.